The sequence spans 212 residues: 2,3-bisphosphoglycerate-dependent phosphoglycerate mutase (212 aa).

Substrate is bound by residues 9 to 16 (RHGQSEWN), 22 to 23 (TG), Arg-61, 88 to 91 (ERDY), Lys-99, 115 to 116 (RR), and 159 to 160 (GN). The active-site Tele-phosphohistidine intermediate is the His-10. Glu-88 functions as the Proton donor/acceptor in the catalytic mechanism.

Belongs to the phosphoglycerate mutase family. BPG-dependent PGAM subfamily. As to quaternary structure, homodimer.

The catalysed reaction is (2R)-2-phosphoglycerate = (2R)-3-phosphoglycerate. It functions in the pathway carbohydrate degradation; glycolysis; pyruvate from D-glyceraldehyde 3-phosphate: step 3/5. In terms of biological role, catalyzes the interconversion of 2-phosphoglycerate and 3-phosphoglycerate. In Methylorubrum populi (strain ATCC BAA-705 / NCIMB 13946 / BJ001) (Methylobacterium populi), this protein is 2,3-bisphosphoglycerate-dependent phosphoglycerate mutase.